The chain runs to 66 residues: Ranalexin (66 aa).

The N-terminal stretch at 1–20 is a signal peptide; that stretch reads MFTLKKSLLLLFFLGTINLS. The propeptide at 21 to 44 is small acidic peptide; that stretch reads LCEEERNAEEERRDNPDERDVEVE. A disulfide bond links C60 and C66.

It belongs to the frog skin active peptide (FSAP) family. Brevinin subfamily. In terms of tissue distribution, expressed by the skin dorsal glands.

Its subcellular location is the secreted. Functionally, potent microbicidal activity, active against S.aureus and E.coli. It also acts as a membrane-disruptive agent at higher concentrations. The sequence is that of Ranalexin from Aquarana catesbeiana (American bullfrog).